Here is a 581-residue protein sequence, read N- to C-terminus: Major facilitator superfamily multidrug transporter NAG4 (581 aa).

Positions 1–14 (MSHATDSTLDNASV) are enriched in polar residues. Residues 1–43 (MSHATDSTLDNASVDSEKVRDFGDDLQNHPVQPTRSILSKIRS) are disordered. A glycan (N-linked (GlcNAc...) asparagine) is linked at Asn-11. Residues 15–27 (DSEKVRDFGDDLQ) show a composition bias toward basic and acidic residues. An N-linked (GlcNAc...) asparagine glycan is attached at Asn-125. Helical transmembrane passes span 132 to 152 (WLYTLVLGAVCFVVALGSAIV), 169 to 189 (VIILASVTVFVIGFGVGPLVF), 199 to 219 (KPIYVVTLFIAVVFIVPCGAA), 230 to 250 (LIDGIAFSAPMTLIGGSLADI), 261 to 281 (AIFSAAPFLGPVCGPIFGGLL), 290 to 310 (WIYWTFLIVAGVFYAIFIAIV), 365 to 385 (IVFLMTIYMAICYGLLYMFFF), 403 to 423 (GVMFIPIGVGVIIATIAAPFF), 447 to 467 (LIPMMIACWFVPVGLFAFAWS), 471 to 491 (WVSWAGPCFSGLAAGFGFCCL), 510 to 530 (ALAAKTFVRSIWGACVPLFTI), and 544 to 564 (LMAFISLACCAIPYLFFFFGA).

The protein belongs to the major facilitator superfamily. DHA1 family. Polyamines/proton antiporter (TC 2.A.1.2.16) subfamily.

The protein resides in the cell membrane. In terms of biological role, MFS transporter involved in N-acetylglucosamine (GlcNAc) uptake. Confers resistance to cycloheximide, 4-nitroquinoline-N-oxide, and 1,10-phenanthroline, and contributes to virulence. The chain is Major facilitator superfamily multidrug transporter NAG4 from Candida albicans (strain SC5314 / ATCC MYA-2876) (Yeast).